The sequence spans 325 residues: Tetraacyldisaccharide 4'-kinase (325 aa).

ATP is bound at residue 58–65; that stretch reads TVGGSGKT.

It belongs to the LpxK family.

It carries out the reaction a lipid A disaccharide + ATP = a lipid IVA + ADP + H(+). It functions in the pathway glycolipid biosynthesis; lipid IV(A) biosynthesis; lipid IV(A) from (3R)-3-hydroxytetradecanoyl-[acyl-carrier-protein] and UDP-N-acetyl-alpha-D-glucosamine: step 6/6. Transfers the gamma-phosphate of ATP to the 4'-position of a tetraacyldisaccharide 1-phosphate intermediate (termed DS-1-P) to form tetraacyldisaccharide 1,4'-bis-phosphate (lipid IVA). The sequence is that of Tetraacyldisaccharide 4'-kinase from Coxiella burnetii (strain CbuK_Q154) (Coxiella burnetii (strain Q154)).